The sequence spans 256 residues: MLRIADKTFDSHLFTGTGKFASSQLMVEAIRASGSQLVTLAMKRVDLRQHNDAILEPLIAAGVALLPNTSGAKTAEEAIFAAHLAREALGTNWLKLEIHPDARWLLPDPIETLKAAETLVQQGFVVLPYCGADPVLCKRLEEVGCAAVMPLGAPIGSNQGLETRAMLEIIIQQATVPVVVDAGIGVPSHATQALEMGADAVLVNTAIAVADDPVNMAKAFRLAVEVGLLARQSGPGSRSYFAHATSPLTGFLEASA.

Catalysis depends on K95, which acts as the Schiff-base intermediate with DXP. 1-deoxy-D-xylulose 5-phosphate contacts are provided by residues G156, A182–G183, and N204–T205.

This sequence belongs to the ThiG family. Homotetramer. Forms heterodimers with either ThiH or ThiS.

It is found in the cytoplasm. It carries out the reaction [ThiS sulfur-carrier protein]-C-terminal-Gly-aminoethanethioate + 2-iminoacetate + 1-deoxy-D-xylulose 5-phosphate = [ThiS sulfur-carrier protein]-C-terminal Gly-Gly + 2-[(2R,5Z)-2-carboxy-4-methylthiazol-5(2H)-ylidene]ethyl phosphate + 2 H2O + H(+). It functions in the pathway cofactor biosynthesis; thiamine diphosphate biosynthesis. Catalyzes the rearrangement of 1-deoxy-D-xylulose 5-phosphate (DXP) to produce the thiazole phosphate moiety of thiamine. Sulfur is provided by the thiocarboxylate moiety of the carrier protein ThiS. In vitro, sulfur can be provided by H(2)S. In Shigella flexneri, this protein is Thiazole synthase.